A 210-amino-acid polypeptide reads, in one-letter code: Ribulose-phosphate 3-epimerase (210 aa).

A substrate-binding site is contributed by S9. Residues H34, D36, and H68 each contribute to the a divalent metal cation site. The active-site Proton acceptor is the D36. Substrate contacts are provided by residues H68, 144–147 (GFGG), 177–179 (DGG), and 199–200 (GS). Position 177 (D177) interacts with a divalent metal cation. D177 acts as the Proton donor in catalysis.

The protein belongs to the ribulose-phosphate 3-epimerase family. It depends on a divalent metal cation as a cofactor.

The enzyme catalyses D-ribulose 5-phosphate = D-xylulose 5-phosphate. The protein operates within carbohydrate degradation. Functionally, catalyzes the reversible epimerization of D-ribulose 5-phosphate to D-xylulose 5-phosphate. The sequence is that of Ribulose-phosphate 3-epimerase from Serratia marcescens.